The following is a 192-amino-acid chain: Phosphomevalonate kinase (192 aa).

ATP is bound by residues 17-23 (KRKSGKD) and Arg-141. Asn-170 is a substrate binding site. 3 residues coordinate ATP: His-171, Arg-176, and Gln-180.

In terms of assembly, monomer. Heart, liver, skeletal muscle, kidney, and pancreas. Lower level in brain, placenta and lung.

It localises to the cytoplasm. The protein resides in the cytosol. It catalyses the reaction (R)-5-phosphomevalonate + ATP = (R)-5-diphosphomevalonate + ADP. It participates in isoprenoid biosynthesis; isopentenyl diphosphate biosynthesis via mevalonate pathway; isopentenyl diphosphate from (R)-mevalonate: step 2/3. Functionally, catalyzes the reversible ATP-dependent phosphorylation of mevalonate 5-phosphate to produce mevalonate diphosphate and ADP, a key step in the mevalonic acid mediated biosynthesis of isopentenyl diphosphate and other polyisoprenoid metabolites. The polypeptide is Phosphomevalonate kinase (PMVK) (Homo sapiens (Human)).